The following is a 151-amino-acid chain: NADH-quinone oxidoreductase subunit I 2 (151 aa).

2 consecutive 4Fe-4S ferredoxin-type domains span residues 49–82 (PRLN…VTSE) and 93–122 (VTFT…LTQD). Residues Cys62, Cys65, Cys68, Cys72, Cys102, Cys105, Cys108, and Cys112 each coordinate [4Fe-4S] cluster.

It belongs to the complex I 23 kDa subunit family. In terms of assembly, NDH-1 is composed of 14 different subunits. Subunits NuoA, H, J, K, L, M, N constitute the membrane sector of the complex. The cofactor is [4Fe-4S] cluster.

The protein localises to the cell inner membrane. It carries out the reaction a quinone + NADH + 5 H(+)(in) = a quinol + NAD(+) + 4 H(+)(out). In terms of biological role, NDH-1 shuttles electrons from NADH, via FMN and iron-sulfur (Fe-S) centers, to quinones in the respiratory chain. The immediate electron acceptor for the enzyme in this species is believed to be ubiquinone. Couples the redox reaction to proton translocation (for every two electrons transferred, four hydrogen ions are translocated across the cytoplasmic membrane), and thus conserves the redox energy in a proton gradient. The protein is NADH-quinone oxidoreductase subunit I 2 of Solibacter usitatus (strain Ellin6076).